The following is a 172-amino-acid chain: Putative phosphoesterase BT9727_1129 (172 aa).

His34 acts as the Proton donor in catalysis. 2 consecutive short sequence motifs (HXTX) follow at residues 34–37 (HITL) and 115–118 (HLTI). His115 functions as the Proton acceptor in the catalytic mechanism.

It belongs to the 2H phosphoesterase superfamily. YjcG family.

The polypeptide is Putative phosphoesterase BT9727_1129 (Bacillus thuringiensis subsp. konkukian (strain 97-27)).